A 698-amino-acid chain; its full sequence is Elongation factor G 1 (698 aa).

The 283-residue stretch at 8–290 (ERYRNIGICA…AVIEFLPAPV (283 aa)) folds into the tr-type G domain. GTP-binding positions include 17–24 (AHVDAGKT), 88–92 (DTPGH), and 142–145 (NKMD).

It belongs to the TRAFAC class translation factor GTPase superfamily. Classic translation factor GTPase family. EF-G/EF-2 subfamily.

The protein localises to the cytoplasm. Catalyzes the GTP-dependent ribosomal translocation step during translation elongation. During this step, the ribosome changes from the pre-translocational (PRE) to the post-translocational (POST) state as the newly formed A-site-bound peptidyl-tRNA and P-site-bound deacylated tRNA move to the P and E sites, respectively. Catalyzes the coordinated movement of the two tRNA molecules, the mRNA and conformational changes in the ribosome. The sequence is that of Elongation factor G 1 from Aliivibrio fischeri (strain ATCC 700601 / ES114) (Vibrio fischeri).